We begin with the raw amino-acid sequence, 405 residues long: Glyceraldehyde-3-phosphate dehydrogenase A, chloroplastic (405 aa).

The N-terminal 68 residues, 1–68 (MASATFSVAK…GHKKSLVVEA (68 aa)), are a transit peptide targeting the chloroplast. NADP(+) contacts are provided by residues 80-81 (RI), Asp104, and Arg149. D-glyceraldehyde 3-phosphate is bound by residues 221-223 (SCT), Thr252, Arg267, 280-281 (TG), and Arg303. The active-site Nucleophile is Cys222. Residue Asn385 participates in NADP(+) binding.

The protein belongs to the glyceraldehyde-3-phosphate dehydrogenase family. In terms of assembly, tetramer of either four A chains (GAPDH 2) or two A and two B chains (GAPDH 1).

It localises to the plastid. The protein localises to the chloroplast. It catalyses the reaction D-glyceraldehyde 3-phosphate + phosphate + NADP(+) = (2R)-3-phospho-glyceroyl phosphate + NADPH + H(+). The protein operates within carbohydrate biosynthesis; Calvin cycle. In Pisum sativum (Garden pea), this protein is Glyceraldehyde-3-phosphate dehydrogenase A, chloroplastic (GAPA).